We begin with the raw amino-acid sequence, 633 residues long: Keratin, type II cytoskeletal 2 epidermal (633 aa).

The tract at residues 1-189 (MSCQISCKSR…DPEIQNVKSQ (189 aa)) is head. Residue arginine 18 is modified to Asymmetric dimethylarginine. Phosphoserine is present on residues serine 21, serine 24, and serine 60. A coil 1A region spans residues 190-225 (EREQIKTLNNKFASFIDKVRFLEQQNQVLQTKWELL). Residues 190–503 (EREQIKTLNN…KLLEGEECRM (314 aa)) enclose the IF rod domain. The linker 1 stretch occupies residues 226–244 (QQLDVSTRTTNLEPIFQAY). The segment at 245-336 (IAKLKKYVDT…FLFDXELSQM (92 aa)) is coil 1B. The segment at 337 to 360 (QTQISETNVTLSMDNNRSLDLDSI) is linker 12. The coil 2 stretch occupies residues 361–499 (ISEVKAQYEE…ATYRKLLEGE (139 aa)). Residues 500-633 (ECRMSGDLSS…SGSSVTFSFR (134 aa)) form a tail region. Over residues 518–527 (SSMSSSMTSR) the composition is skewed to low complexity. Residues 518–633 (SSMSSSMTSR…SGSSVTFSFR (116 aa)) form a disordered region. Residues 528-613 (GGFGGYGSGG…GYGSGGGSRG (86 aa)) show a composition bias toward gly residues. Omega-N-methylarginine is present on residues arginine 588 and arginine 612.

This sequence belongs to the intermediate filament family. As to quaternary structure, heterotetramer of two type I and two type II keratins. Associates with KRT10.

The protein resides in the cytoplasm. In terms of biological role, probably contributes to terminal cornification. Associated with keratinocyte activation, proliferation and keratinization. Required for maintenance of corneocytes and keratin filaments in suprabasal keratinocytes in the epidermis of the ear, potentially via moderation of expression and localization of keratins and their partner proteins. Plays a role in the establishment of the epidermal barrier on plantar skin. In Canis lupus familiaris (Dog), this protein is Keratin, type II cytoskeletal 2 epidermal (KRT2).